The chain runs to 257 residues: 3-deoxy-manno-octulosonate cytidylyltransferase (257 aa).

The protein belongs to the KdsB family.

It is found in the cytoplasm. It carries out the reaction 3-deoxy-alpha-D-manno-oct-2-ulosonate + CTP = CMP-3-deoxy-beta-D-manno-octulosonate + diphosphate. It participates in nucleotide-sugar biosynthesis; CMP-3-deoxy-D-manno-octulosonate biosynthesis; CMP-3-deoxy-D-manno-octulosonate from 3-deoxy-D-manno-octulosonate and CTP: step 1/1. It functions in the pathway bacterial outer membrane biogenesis; lipopolysaccharide biosynthesis. Activates KDO (a required 8-carbon sugar) for incorporation into bacterial lipopolysaccharide in Gram-negative bacteria. This Albidiferax ferrireducens (strain ATCC BAA-621 / DSM 15236 / T118) (Rhodoferax ferrireducens) protein is 3-deoxy-manno-octulosonate cytidylyltransferase.